A 338-amino-acid polypeptide reads, in one-letter code: Anthocyanidin reductase ((2S)-flavan-3-ol-forming) (338 aa).

NADP(+) contacts are provided by residues 18-21 (TGFV), K48, 87-90 (VATP), and Y168.

It belongs to the NAD(P)-dependent epimerase/dehydratase family. Dihydroflavonol-4-reductase subfamily.

The enzyme catalyses a (2S,3R)-flavan-3-ol + 2 NADP(+) = an anthocyanidin with a 3-hydroxy group + 2 NADPH + 2 H(+). It catalyses the reaction a (2S,3S)-flavan-3-ol + 2 NADP(+) = an anthocyanidin with a 3-hydroxy group + 2 NADPH + 2 H(+). Its pathway is secondary metabolite biosynthesis; flavonoid biosynthesis. In terms of biological role, produces the terminal flavan-3-ol monomers required for the formation of proanthocyanidins or condensed tannins in leaves and flowers, as well as in the skin and seeds of developing berries. Behaves as a reductase and as a C-3 epimerase. Catalyzes the double reduction of anthocyanidins, producing a mixture of (2S,3S)- and (2S,3R)-flavan-3-ols. The enzyme catalyzes sequential hydride transfers to C-2 and C-4, respectively and epimerization at C-3 is achieved by tautomerization that occurs between the two hydride transfers. Converts cyanidin, pelargonidin and delphinidin into catechin and epicatechin, afzelechin and epiafzelechin, and gallocatechin and epigallocatechin respectively. The chain is Anthocyanidin reductase ((2S)-flavan-3-ol-forming) from Vitis vinifera (Grape).